The primary structure comprises 251 residues: Cell division protein ZapD (251 aa).

Belongs to the ZapD family. As to quaternary structure, interacts with FtsZ.

The protein resides in the cytoplasm. Cell division factor that enhances FtsZ-ring assembly. Directly interacts with FtsZ and promotes bundling of FtsZ protofilaments, with a reduction in FtsZ GTPase activity. This is Cell division protein ZapD from Paraburkholderia phytofirmans (strain DSM 17436 / LMG 22146 / PsJN) (Burkholderia phytofirmans).